Consider the following 789-residue polypeptide: Cadherin-6 (789 aa).

The N-terminal stretch at 1–18 (MRTYRYFLLLFWVGQPYP) is a signal peptide. The propeptide occupies 19 to 53 (TFSNPLSKRTSGFPAKRRALELSANSRNELSRSKR). 5 Cadherin domains span residues 54–159 (SWMW…EPIF), 160–268 (TKDV…PPRF), 269–383 (PQST…PPVF), 384–486 (SKPA…DNAP), and 487–608 (EFAE…LIHP). The Extracellular segment spans residues 54 to 615 (SWMWNQFFLL…IHPTGLSTGA (562 aa)). N-linked (GlcNAc...) asparagine glycosylation is present at Asn255. The segment at 259–288 (TDVNDNPPRFPQSTYQFKTPESSPPGTPIG) is disordered. The span at 269 to 279 (PQSTYQFKTPE) shows a compositional bias: polar residues. N-linked (GlcNAc...) asparagine glycosylation is found at Asn399, Asn437, Asn455, and Asn536. A helical membrane pass occupies residues 616 to 636 (LVAILLCIVILLVTVVLFAAL). Over 637–789 (RRQRKKEPLI…YGGMDSDKDS (153 aa)) the chain is Cytoplasmic. Ser785 and Ser789 each carry phosphoserine.

In terms of tissue distribution, highly expressed in kidney and brain.

Its subcellular location is the cell membrane. In terms of biological role, cadherins are calcium-dependent cell adhesion proteins. They preferentially interact with themselves in a homophilic manner in connecting cells; cadherins may thus contribute to the sorting of heterogeneous cell types. In Rattus norvegicus (Rat), this protein is Cadherin-6 (Cdh6).